A 617-amino-acid chain; its full sequence is Dihydroxy-acid dehydratase (617 aa).

Asp81 serves as a coordination point for Mg(2+). Cys122 provides a ligand contact to [2Fe-2S] cluster. Asp123 and Lys124 together coordinate Mg(2+). An N6-carboxylysine modification is found at Lys124. Position 195 (Cys195) interacts with [2Fe-2S] cluster. Glu491 is a Mg(2+) binding site. Ser517 functions as the Proton acceptor in the catalytic mechanism.

The protein belongs to the IlvD/Edd family. As to quaternary structure, homodimer. Requires [2Fe-2S] cluster as cofactor. Mg(2+) is required as a cofactor.

The catalysed reaction is (2R)-2,3-dihydroxy-3-methylbutanoate = 3-methyl-2-oxobutanoate + H2O. The enzyme catalyses (2R,3R)-2,3-dihydroxy-3-methylpentanoate = (S)-3-methyl-2-oxopentanoate + H2O. The protein operates within amino-acid biosynthesis; L-isoleucine biosynthesis; L-isoleucine from 2-oxobutanoate: step 3/4. It functions in the pathway amino-acid biosynthesis; L-valine biosynthesis; L-valine from pyruvate: step 3/4. In terms of biological role, functions in the biosynthesis of branched-chain amino acids. Catalyzes the dehydration of (2R,3R)-2,3-dihydroxy-3-methylpentanoate (2,3-dihydroxy-3-methylvalerate) into 2-oxo-3-methylpentanoate (2-oxo-3-methylvalerate) and of (2R)-2,3-dihydroxy-3-methylbutanoate (2,3-dihydroxyisovalerate) into 2-oxo-3-methylbutanoate (2-oxoisovalerate), the penultimate precursor to L-isoleucine and L-valine, respectively. The sequence is that of Dihydroxy-acid dehydratase from Buchnera aphidicola subsp. Acyrthosiphon pisum (strain 5A).